Here is a 71-residue protein sequence, read N- to C-terminus: IRCFITPDVTSQICADGHVCYTKTWCDAWCTSRGKRVDLGCAATCPTVKTGVDIKCCSTDNCNPFPTRNRP.

Disulfide bonds link cysteine 3–cysteine 20, cysteine 14–cysteine 41, cysteine 26–cysteine 30, cysteine 45–cysteine 56, and cysteine 57–cysteine 62.

As to expression, expressed by the venom gland.

It localises to the secreted. Binds with high affinity to muscular (alpha-1-beta-1-gamma-delta/CHRNA1-CHRNB1-CHRNG-CHRND) and neuronal (alpha-7/CHRNA7) nicotinic acetylcholine receptor (nAChR) and inhibits acetylcholine from binding to the receptor, thereby impairing neuromuscular and neuronal transmission. Ranges of nAChR inhibition are in nanomolar (competitive binding with alpha-bungarotoxin gives Ki=1.66 nM on muscle nAChR and Ki=4.84 nM on alpha-7). Also shows moderate inhibition on GABA(A) alpha-1-beta-3-gamma-2 receptor (GABRA1-GABRB3-GABRG2) (IC(50)=0.68 uM), and a lower inhibition on alpha-1-beta-2-gamma-2 (GABRA1-GABRB2-GABRG2) and alpha-3-beta-2-gamma-2 (GABRA3-GABRB2-GABRG2). This chain is Long neurotoxin Tx-NM3-1, found in Naja melanoleuca (Forest cobra).